Reading from the N-terminus, the 920-residue chain is Ubiquitin ligase-binding protein BUL2 (920 aa).

Polar residues predominate over residues 1-10 (MTFTFSTSSR). Positions 1–89 (MTFTFSTSSR…EENSLEMDCT (89 aa)) are disordered. Residue threonine 22 is modified to Phosphothreonine. Polar residues predominate over residues 35–57 (QQLSSNSTDNSLHPNSGQTPRAS). The segment covering 73 to 82 (DRLRQEREEN) has biased composition (basic and acidic residues). Positions 129-133 (FPPSY) match the PY-motif motif. A Phosphoserine modification is found at serine 557.

It belongs to the BUL1 family. As to quaternary structure, component of the RSP5-BUL1/2 ubiquitin ligase complex composed of at least RSP5 and BUL1 or BUL2.

It localises to the cytoplasm. It participates in protein modification; protein ubiquitination. In terms of biological role, component of a RSP5 ubiquitin ligase complex which specifies polyubiquitination and intracellular trafficking of the general amino acid permease GAP1 as well as other permeases such as PMA1. The RSP5-BUL1/2 complex is also necessary for the heat-shock element (HSE)-mediated gene expression, nitrogen starvation GLN3-dependent transcription and pressure-induced differential regulation of the 2 tryptophan permeases TAT1 and TAT2. The polypeptide is Ubiquitin ligase-binding protein BUL2 (BUL2) (Saccharomyces cerevisiae (strain ATCC 204508 / S288c) (Baker's yeast)).